The following is a 1391-amino-acid chain: DNA-directed RNA polymerase subunit beta (1391 aa).

This sequence belongs to the RNA polymerase beta chain family. The RNAP catalytic core consists of 2 alpha, 1 beta, 1 beta' and 1 omega subunit. When a sigma factor is associated with the core the holoenzyme is formed, which can initiate transcription.

It catalyses the reaction RNA(n) + a ribonucleoside 5'-triphosphate = RNA(n+1) + diphosphate. In terms of biological role, DNA-dependent RNA polymerase catalyzes the transcription of DNA into RNA using the four ribonucleoside triphosphates as substrates. This Paramagnetospirillum magneticum (strain ATCC 700264 / AMB-1) (Magnetospirillum magneticum) protein is DNA-directed RNA polymerase subunit beta.